Reading from the N-terminus, the 78-residue chain is DNA-directed RNA polymerase subunit omega (78 aa).

This sequence belongs to the RNA polymerase subunit omega family. As to quaternary structure, in cyanobacteria the RNAP catalytic core is composed of 2 alpha, 1 beta, 1 beta', 1 gamma and 1 omega subunit. When a sigma factor is associated with the core the holoenzyme is formed, which can initiate transcription.

The catalysed reaction is RNA(n) + a ribonucleoside 5'-triphosphate = RNA(n+1) + diphosphate. In terms of biological role, promotes RNA polymerase assembly. Latches the N- and C-terminal regions of the beta' subunit thereby facilitating its interaction with the beta and alpha subunits. This is DNA-directed RNA polymerase subunit omega from Prochlorococcus marinus (strain MIT 9515).